We begin with the raw amino-acid sequence, 61 residues long: Conotoxin Vn5.3 (61 aa).

The signal sequence occupies residues 1–19; that stretch reads MHCLPVFVILLLLIASAPG. The propeptide occupies 20–50; sequence VDVQPKTKNFMTRASLRDFAKKTPKRLSKLR.

This sequence belongs to the conotoxin T superfamily. Contains 2 disulfide bonds that can be either 'C1-C3, C2-C4' or 'C1-C4, C2-C3', since these disulfide connectivities have been observed for conotoxins with cysteine framework V (for examples, see AC P0DQQ7 and AC P81755). Expressed by the venom duct.

Its subcellular location is the secreted. The protein is Conotoxin Vn5.3 of Conus ventricosus (Mediterranean cone).